The chain runs to 172 residues: Small ribosomal subunit protein uS5 (172 aa).

One can recognise an S5 DRBM domain in the interval 16 to 79 (LKEKLVHINR…EDGKKNVIKV (64 aa)).

Belongs to the universal ribosomal protein uS5 family. As to quaternary structure, part of the 30S ribosomal subunit. Contacts proteins S4 and S8.

Functionally, with S4 and S12 plays an important role in translational accuracy. Its function is as follows. Located at the back of the 30S subunit body where it stabilizes the conformation of the head with respect to the body. The chain is Small ribosomal subunit protein uS5 from Pelodictyon phaeoclathratiforme (strain DSM 5477 / BU-1).